Here is a 195-residue protein sequence, read N- to C-terminus: MRTASISRRTAETDVSVSIDLDGTGKATIATSVGFLDHMLELFARHGLFDVTIKVEGDLHVDQHHTTEDTGIALGQAVAKALGDKRGIARYADIHLPMDETLSRIAIDISGRPFLVFRTTFRVEKIGQFDTELVREFFQAFAMNAGITLHVETLYGDNAHHIAESVFKGLARALRKAVAIDPREDGRVPSTKGSL.

Belongs to the imidazoleglycerol-phosphate dehydratase family.

The protein localises to the cytoplasm. It catalyses the reaction D-erythro-1-(imidazol-4-yl)glycerol 3-phosphate = 3-(imidazol-4-yl)-2-oxopropyl phosphate + H2O. It functions in the pathway amino-acid biosynthesis; L-histidine biosynthesis; L-histidine from 5-phospho-alpha-D-ribose 1-diphosphate: step 6/9. This Methylorubrum populi (strain ATCC BAA-705 / NCIMB 13946 / BJ001) (Methylobacterium populi) protein is Imidazoleglycerol-phosphate dehydratase.